A 132-amino-acid polypeptide reads, in one-letter code: Small ribosomal subunit protein uS8 (132 aa).

The protein belongs to the universal ribosomal protein uS8 family. In terms of assembly, part of the 30S ribosomal subunit. Contacts proteins S5 and S12.

Functionally, one of the primary rRNA binding proteins, it binds directly to 16S rRNA central domain where it helps coordinate assembly of the platform of the 30S subunit. This is Small ribosomal subunit protein uS8 from Natranaerobius thermophilus (strain ATCC BAA-1301 / DSM 18059 / JW/NM-WN-LF).